Reading from the N-terminus, the 869-residue chain is Valine--tRNA ligase (869 aa).

The 'HIGH' region motif lies at 51 to 61 (PNVTGNLHLGH). The 'KMSKS' region motif lies at 523 to 527 (KMSKS). ATP is bound at residue lysine 526. Residues 797–869 (EDLLGSNNEA…ELEKLLSSHK (73 aa)) adopt a coiled-coil conformation.

It belongs to the class-I aminoacyl-tRNA synthetase family. ValS type 1 subfamily. Monomer.

It is found in the cytoplasm. It carries out the reaction tRNA(Val) + L-valine + ATP = L-valyl-tRNA(Val) + AMP + diphosphate. Its function is as follows. Catalyzes the attachment of valine to tRNA(Val). As ValRS can inadvertently accommodate and process structurally similar amino acids such as threonine, to avoid such errors, it has a 'posttransfer' editing activity that hydrolyzes mischarged Thr-tRNA(Val) in a tRNA-dependent manner. This Malacoplasma penetrans (strain HF-2) (Mycoplasma penetrans) protein is Valine--tRNA ligase.